Consider the following 214-residue polypeptide: Pyridoxine/pyridoxamine 5'-phosphate oxidase (214 aa).

Residues 8–11 (RINY) and Lys-66 contribute to the substrate site. FMN contacts are provided by residues 61–66 (RILLIK), 76–77 (FT), Arg-82, Lys-83, and Gln-105. Substrate-binding residues include Tyr-123, Arg-127, and Ser-131. Residues 140 to 141 (QS) and Trp-184 contribute to the FMN site. 190–192 (RLH) is a binding site for substrate. Arg-194 contributes to the FMN binding site.

It belongs to the pyridoxamine 5'-phosphate oxidase family. Homodimer. FMN is required as a cofactor.

It catalyses the reaction pyridoxamine 5'-phosphate + O2 + H2O = pyridoxal 5'-phosphate + H2O2 + NH4(+). The catalysed reaction is pyridoxine 5'-phosphate + O2 = pyridoxal 5'-phosphate + H2O2. Its pathway is cofactor metabolism; pyridoxal 5'-phosphate salvage; pyridoxal 5'-phosphate from pyridoxamine 5'-phosphate: step 1/1. The protein operates within cofactor metabolism; pyridoxal 5'-phosphate salvage; pyridoxal 5'-phosphate from pyridoxine 5'-phosphate: step 1/1. Functionally, catalyzes the oxidation of either pyridoxine 5'-phosphate (PNP) or pyridoxamine 5'-phosphate (PMP) into pyridoxal 5'-phosphate (PLP). This chain is Pyridoxine/pyridoxamine 5'-phosphate oxidase, found in Burkholderia vietnamiensis (strain G4 / LMG 22486) (Burkholderia cepacia (strain R1808)).